The following is a 1141-amino-acid chain: Envelopment polyprotein (1141 aa).

A signal peptide spans 1-18 (MGRLYLIVLGVLITATAG). Over 19-483 (FPRSVHELKI…HSLAVELCVP (465 aa)) the chain is Lumenal. 10 cysteine pairs are disulfide-bonded: Cys30–Cys158, Cys64–Cys164, Cys113–Cys135, Cys140–Cys145, Cys182–Cys192, Cys217–Cys253, Cys242–Cys357, Cys382–Cys441, Cys386–Cys395, and Cys458–Cys481. Asn141 is a glycosylation site (N-linked (GlcNAc...) asparagine; by host). N-linked (GlcNAc...) asparagine; by host glycosylation occurs at Asn353. Residue Asn405 is glycosylated (N-linked (GlcNAc...) asparagine; by host). A helical transmembrane segment spans residues 484–506 (GIHGWATIALVITFCFGWLLIPT). Over 507–633 (TTMVVLKCLR…LGVFRYKSRC (127 aa)) the chain is Cytoplasmic. The binding to the ribonucleoprotein stretch occupies residues 522–539 (CSHYSTESKFKVILEKVK). 2 consecutive CCHC-type zinc fingers follow at residues 551-571 (CDIC…KKSC) and 576-597 (CPYC…YAVC). Binding to the ribonucleoprotein stretches follow at residues 594–611 (YAVC…KKSL), 598–609 (KLTGRFHEALKK), and 617–631 (QRGC…RYKS). Residues 617 to 640 (QRGCYRTLGVFRYKSRCYVGLVWM) form the ITAM domain. Phosphotyrosine occurs at positions 621 and 634. A YxxL motif is present at residues 621–624 (YRTL). Residues 634 to 654 (YVGLVWMCLLTLELIVWAASA) traverse the membrane as a helical segment. Residues 655-1110 (DTPLLEPGWS…EWLLGILNGN (456 aa)) lie on the Lumenal side of the membrane. 8 disulfide bridges follow: Cys741-Cys776, Cys745-Cys783, Cys757-Cys890, Cys771-Cys901, Cys786-Cys909, Cys812-Cys821, Cys829-Cys838, and Cys869-Cys873. The tract at residues 763–783 (YQYETSWSCNPPDCPGVGTGC) is fusion loop. N-linked (GlcNAc...) asparagine; by host glycosylation occurs at Asn933. Intrachain disulfides connect Cys975/Cys1005, Cys998/Cys1050, Cys1015/Cys1020, Cys1051/Cys1056, and Cys1090/Cys1094. The helical transmembrane segment at 1111–1131 (WVVVAVLVIILLISIFLFSFF) threads the bilayer. Residues 1127-1141 (LFSFFCPIRSHKKQL) form a binding to the ribonucleoprotein region. At 1132 to 1141 (CPIRSHKKQL) the chain is on the cytoplasmic side.

Belongs to the hantavirus envelope glycoprotein family. As to quaternary structure, homodimer. Homotetramer; forms heterotetrameric Gn-Gc spikes in the pre-fusion conformation. Interacts (via C-terminus) with the nucleoprotein. Interacts with host TUFM; this interaction contributes to the virus-induced degradation of mitochondria by autophagy, which leads to degradation of host MAVS and inhibition of type I interferon (IFN) responses. Interacts with host MAP1LC3B; this interaction contributes to the virus-induced degradation of mitochondria by autophagy, which leads to degradation of host MAVS and inhibition of type I interferon (IFN) responses. Homodimer. Homotetramer; forms heterotetrameric Gn-Gc spikes in the pre-fusion conformation. Homotrimer; forms homotrimer in the post-fusion conformation at acidic pH. Interacts (via C-terminus) with the nucleoprotein. Post-translationally, envelope polyprotein precursor is quickly cleaved in vivo just after synthesis, presumably by host signal peptidase.

It localises to the virion membrane. It is found in the host cell surface. The protein resides in the host Golgi apparatus membrane. Its subcellular location is the host endoplasmic reticulum membrane. The protein localises to the host mitochondrion. In terms of biological role, forms homotetramers with glycoprotein C at the surface of the virion. Attaches the virion to host cell receptors including integrin ITGAV/ITGB3. This attachment induces virion internalization predominantly through clathrin-dependent endocytosis. Mediates the assembly and budding of infectious virus particles through its interaction with the nucleocapsid protein and the viral genome. May dysregulate normal immune and endothelial cell responses through an ITAM motif. Translocates to mitochondria, binds to host TUFM and recruits MAP1LC3B. These interactions induce mitochondrial autophagy and therefore destruction of host MAVS leading to inhibition of type I interferon (IFN) responses. Concomitant breakdown of glycoprotein N is apparently prevented by the nucleoprotein that may inhibit Gn-stimulated autophagosome-lysosome fusion. Interacts with the viral genomic RNA. Its function is as follows. Forms homotetramers with glycoprotein N at the surface of the virion. Attaches the virion to host cell receptors including integrin ITGAV/ITGB3. This attachment induces virion internalization predominantly through clathrin-dependent endocytosis. Class II fusion protein that promotes fusion of viral membrane with host endosomal membrane after endocytosis of the virion. This Homo sapiens (Human) protein is Envelopment polyprotein (GP).